A 387-amino-acid chain; its full sequence is Succinate--CoA ligase [ADP-forming] subunit beta (387 aa).

The region spanning 9 to 244 (KQLFASYGLP…VSQEDDRENR (236 aa)) is the ATP-grasp domain. ATP contacts are provided by residues Lys46, 53-55 (GRG), Glu99, Cys102, and Glu107. Residues Asn199 and Asp213 each contribute to the Mg(2+) site. Residues Asn264 and 321 to 323 (GIV) contribute to the substrate site.

It belongs to the succinate/malate CoA ligase beta subunit family. In terms of assembly, heterotetramer of two alpha and two beta subunits. The cofactor is Mg(2+).

The catalysed reaction is succinate + ATP + CoA = succinyl-CoA + ADP + phosphate. It carries out the reaction GTP + succinate + CoA = succinyl-CoA + GDP + phosphate. It participates in carbohydrate metabolism; tricarboxylic acid cycle; succinate from succinyl-CoA (ligase route): step 1/1. In terms of biological role, succinyl-CoA synthetase functions in the citric acid cycle (TCA), coupling the hydrolysis of succinyl-CoA to the synthesis of either ATP or GTP and thus represents the only step of substrate-level phosphorylation in the TCA. The beta subunit provides nucleotide specificity of the enzyme and binds the substrate succinate, while the binding sites for coenzyme A and phosphate are found in the alpha subunit. The protein is Succinate--CoA ligase [ADP-forming] subunit beta of Legionella pneumophila (strain Paris).